The sequence spans 593 residues: DNA primase (593 aa).

The CHC2-type zinc-finger motif lies at 38 to 62 (CPFHQEKTPSFTVSDSKRFFYCFGC). The Toprim domain maps to 250-332 (NRSILVEGYF…EKKISFIRLP (83 aa)). Mg(2+) is bound by residues Glu256, Asp300, and Asp302.

The protein belongs to the DnaG primase family. As to quaternary structure, monomer. Interacts with DnaB. Zn(2+) is required as a cofactor. Requires Mg(2+) as cofactor.

It carries out the reaction ssDNA + n NTP = ssDNA/pppN(pN)n-1 hybrid + (n-1) diphosphate.. Functionally, RNA polymerase that catalyzes the synthesis of short RNA molecules used as primers for DNA polymerase during DNA replication. The protein is DNA primase of Rickettsia prowazekii (strain Madrid E).